The primary structure comprises 153 residues: 3-hydroxyacyl-[acyl-carrier-protein] dehydratase FabZ (153 aa).

The active site involves His57.

This sequence belongs to the thioester dehydratase family. FabZ subfamily.

The protein localises to the cytoplasm. It catalyses the reaction a (3R)-hydroxyacyl-[ACP] = a (2E)-enoyl-[ACP] + H2O. Its function is as follows. Involved in unsaturated fatty acids biosynthesis. Catalyzes the dehydration of short chain beta-hydroxyacyl-ACPs and long chain saturated and unsaturated beta-hydroxyacyl-ACPs. The sequence is that of 3-hydroxyacyl-[acyl-carrier-protein] dehydratase FabZ from Xanthomonas oryzae pv. oryzae (strain MAFF 311018).